The sequence spans 294 residues: Bifunctional protein FolD (294 aa).

NADP(+) contacts are provided by residues 166 to 168 (GRS), Ser195, and Ile236.

This sequence belongs to the tetrahydrofolate dehydrogenase/cyclohydrolase family. Homodimer.

It catalyses the reaction (6R)-5,10-methylene-5,6,7,8-tetrahydrofolate + NADP(+) = (6R)-5,10-methenyltetrahydrofolate + NADPH. The catalysed reaction is (6R)-5,10-methenyltetrahydrofolate + H2O = (6R)-10-formyltetrahydrofolate + H(+). Its pathway is one-carbon metabolism; tetrahydrofolate interconversion. Its function is as follows. Catalyzes the oxidation of 5,10-methylenetetrahydrofolate to 5,10-methenyltetrahydrofolate and then the hydrolysis of 5,10-methenyltetrahydrofolate to 10-formyltetrahydrofolate. The polypeptide is Bifunctional protein FolD (Chloroherpeton thalassium (strain ATCC 35110 / GB-78)).